A 1072-amino-acid chain; its full sequence is Error-prone DNA polymerase (1072 aa).

This sequence belongs to the DNA polymerase type-C family. DnaE2 subfamily.

It localises to the cytoplasm. The catalysed reaction is DNA(n) + a 2'-deoxyribonucleoside 5'-triphosphate = DNA(n+1) + diphosphate. In terms of biological role, DNA polymerase involved in damage-induced mutagenesis and translesion synthesis (TLS). It is not the major replicative DNA polymerase. This Burkholderia pseudomallei (strain K96243) protein is Error-prone DNA polymerase.